The chain runs to 223 residues: Serine/threonine/tyrosine-interacting protein (223 aa).

In terms of domain architecture, Tyrosine-protein phosphatase spans E28–A176. The short motif at F76–Q78 is the Interaction with FBXW7 element. Phosphoserine is present on residues S184 and S201. Positions T199–G223 are disordered.

It belongs to the protein-tyrosine phosphatase family. Non-receptor class subfamily. In terms of assembly, interacts with MAPK1; independently of MAPK1 phosphorylation status. Interacts with CARHSP1/Crhsp-24. Interacts (via FQQ motif) with FBXW7 (via F-box domain); the interaction is direct and prevents FBXW7 interaction with SKP1, a component of the SCF(FBXW7) complex. In terms of tissue distribution, widely expressed with highest levels in muscle, testis and brain. In testis, expression starts 13-14 days after birth and is limited to the seminiferous tubule and to round and elongating spermatids. Expression is low in condensing spermatids and pachytene spermatocytes, and absent in spermatogonia, spermatozoa and somatic Sertoli cells.

It is found in the nucleus. Its subcellular location is the cytoplasm. It localises to the cytosol. Its function is as follows. Catalytically inactive phosphatase. Acts as a nuclear anchor for MAPK1/MAPK3 (ERK1/ERK2). Modulates cell-fate decisions and cell migration by spatiotemporal regulation of MAPK1/MAPK3 (ERK1/ERK2). By binding to the F-box of FBXW7, prevents the assembly of FBXW7 into the SCF E3 ubiquitin-protein ligase complex, and thereby inhibits degradation of its substrates. Plays a role in spermatogenesis. In Mus musculus (Mouse), this protein is Serine/threonine/tyrosine-interacting protein.